Here is a 336-residue protein sequence, read N- to C-terminus: NADH-quinone oxidoreductase subunit H (336 aa).

The next 8 helical transmembrane spans lie at 4-24 (YILWTALYVLLIVIPLILVVA), 75-95 (YLFFIAPILAFAPAYAAWAVI), 108-128 (LGLLYILAMTSFSVYGIVIAG), 154-174 (MGFAIVGVVIAAGSMGITGII), 181-201 (LWHWYFIPLFPLFVVYFIAGI), 233-253 (LFFLAEYANMILISILTSIMF), 272-292 (FVPGVVWLFAKTGIFMFMFLW), and 308-328 (LGWKIFIPLTFVWVVVVACMV).

It belongs to the complex I subunit 1 family. In terms of assembly, NDH-1 is composed of 14 different subunits. Subunits NuoA, H, J, K, L, M, N constitute the membrane sector of the complex.

Its subcellular location is the cell inner membrane. The catalysed reaction is a quinone + NADH + 5 H(+)(in) = a quinol + NAD(+) + 4 H(+)(out). Functionally, NDH-1 shuttles electrons from NADH, via FMN and iron-sulfur (Fe-S) centers, to quinones in the respiratory chain. The immediate electron acceptor for the enzyme in this species is believed to be ubiquinone. Couples the redox reaction to proton translocation (for every two electrons transferred, four hydrogen ions are translocated across the cytoplasmic membrane), and thus conserves the redox energy in a proton gradient. This subunit may bind ubiquinone. This chain is NADH-quinone oxidoreductase subunit H, found in Francisella philomiragia subsp. philomiragia (strain ATCC 25017 / CCUG 19701 / FSC 153 / O#319-036).